The following is a 364-amino-acid chain: Ferrochelatase (364 aa).

Residues His211 and Glu292 each coordinate Fe cation.

The protein belongs to the ferrochelatase family.

It is found in the cytoplasm. It catalyses the reaction heme b + 2 H(+) = protoporphyrin IX + Fe(2+). It participates in porphyrin-containing compound metabolism; protoheme biosynthesis; protoheme from protoporphyrin-IX: step 1/1. Catalyzes the ferrous insertion into protoporphyrin IX. This chain is Ferrochelatase, found in Nitrosomonas europaea (strain ATCC 19718 / CIP 103999 / KCTC 2705 / NBRC 14298).